The sequence spans 1534 residues: ABC transporter G family member 6 (1534 aa).

Over residues methionine 1–serine 11 the composition is skewed to basic and acidic residues. Residues methionine 1–lysine 85 form a disordered region. A compositionally biased stretch (low complexity) spans asparagine 21–leucine 65. The ABC transporter 1 domain occupies valine 138–serine 385. Glycine 177–serine 184 provides a ligand contact to ATP. In terms of domain architecture, ABC transmembrane type-2 1 spans arginine 481–phenylalanine 757. Helical transmembrane passes span asparagine 486–tryptophan 506, leucine 521–phenylalanine 541, isoleucine 566–tryptophan 586, proline 592–leucine 612, isoleucine 625–phenylalanine 645, isoleucine 652–leucine 672, and valine 734–leucine 754. The tract at residues lysine 781–serine 907 is disordered. The segment covering isoleucine 797–glutamate 808 has biased composition (acidic residues). Residues serine 830 to tyrosine 841 are compositionally biased toward polar residues. Positions asparagine 842–asparagine 856 are enriched in low complexity. Residues threonine 864–asparagine 873 are compositionally biased toward polar residues. The span at serine 874–asparagine 896 shows a compositional bias: low complexity. The span at glutamate 897–glycine 906 shows a compositional bias: basic and acidic residues. The 243-residue stretch at valine 924–glycine 1166 folds into the ABC transporter 2 domain. Glycine 960–serine 967 provides a ligand contact to ATP. In terms of domain architecture, ABC transmembrane type-2 2 spans leucine 1256–isoleucine 1529. The next 6 membrane-spanning stretches (helical) occupy residues isoleucine 1261 to valine 1281, leucine 1296 to valine 1316, tyrosine 1345 to leucine 1365, cysteine 1377 to valine 1397, methionine 1404 to isoleucine 1424, and isoleucine 1506 to phenylalanine 1526.

This sequence belongs to the ABC transporter superfamily. ABCG family. PDR (TC 3.A.1.205) subfamily.

The protein resides in the membrane. This Dictyostelium discoideum (Social amoeba) protein is ABC transporter G family member 6 (abcG6).